The primary structure comprises 79 residues: Exodeoxyribonuclease 7 small subunit (79 aa).

This sequence belongs to the XseB family. Heterooligomer composed of large and small subunits.

The protein localises to the cytoplasm. It catalyses the reaction Exonucleolytic cleavage in either 5'- to 3'- or 3'- to 5'-direction to yield nucleoside 5'-phosphates.. Its function is as follows. Bidirectionally degrades single-stranded DNA into large acid-insoluble oligonucleotides, which are then degraded further into small acid-soluble oligonucleotides. The protein is Exodeoxyribonuclease 7 small subunit of Lactococcus lactis subsp. cremoris (strain SK11).